Reading from the N-terminus, the 498-residue chain is ATP synthase subunit beta, chloroplastic (498 aa).

G172 to T179 is an ATP binding site.

Belongs to the ATPase alpha/beta chains family. In terms of assembly, F-type ATPases have 2 components, CF(1) - the catalytic core - and CF(0) - the membrane proton channel. CF(1) has five subunits: alpha(3), beta(3), gamma(1), delta(1), epsilon(1). CF(0) has four main subunits: a(1), b(1), b'(1) and c(9-12).

The protein localises to the plastid. Its subcellular location is the chloroplast thylakoid membrane. The catalysed reaction is ATP + H2O + 4 H(+)(in) = ADP + phosphate + 5 H(+)(out). Produces ATP from ADP in the presence of a proton gradient across the membrane. The catalytic sites are hosted primarily by the beta subunits. In Whiteheadia bifolia (Elephants ears), this protein is ATP synthase subunit beta, chloroplastic.